Here is a 191-residue protein sequence, read N- to C-terminus: MTEVQQTEKVTPRLKTKYREEIRGALQEQFQYGNVMQVPGLVKVVVNMGVGEAAKDSKIIDGAVTDLTAITGQKPMITKARKSIAQFKLREGMPIGTHATLRGDRMWEFLDRLVTLALPRIRDFRGLSDRQFDGNGNYTFGLSEQTVFHEIDQDKIDRVRGMDITVVTTAKNDDEGRALLKALGFPFKTDQ.

It belongs to the universal ribosomal protein uL5 family. Part of the 50S ribosomal subunit; part of the 5S rRNA/L5/L18/L25 subcomplex. Contacts the 5S rRNA and the P site tRNA. Forms a bridge to the 30S subunit in the 70S ribosome.

Functionally, this is one of the proteins that bind and probably mediate the attachment of the 5S RNA into the large ribosomal subunit, where it forms part of the central protuberance. In the 70S ribosome it contacts protein S13 of the 30S subunit (bridge B1b), connecting the 2 subunits; this bridge is implicated in subunit movement. Contacts the P site tRNA; the 5S rRNA and some of its associated proteins might help stabilize positioning of ribosome-bound tRNAs. This is Large ribosomal subunit protein uL5 from Micrococcus luteus (strain ATCC 4698 / DSM 20030 / JCM 1464 / CCM 169 / CCUG 5858 / IAM 1056 / NBRC 3333 / NCIMB 9278 / NCTC 2665 / VKM Ac-2230) (Micrococcus lysodeikticus).